Consider the following 294-residue polypeptide: Putative HTH-type transcriptional regulatory protein STK_12680 (294 aa).

Residues 123 to 175 (LKKKREEMGLSLGEVAQALGVSRISIYDYEREDSYVSIDIAEKLVELFGDDIL) form the HTH cro/C1-type domain. Positions 134 to 153 (LGEVAQALGVSRISIYDYER) form a DNA-binding region, H-T-H motif.

This is Putative HTH-type transcriptional regulatory protein STK_12680 from Sulfurisphaera tokodaii (strain DSM 16993 / JCM 10545 / NBRC 100140 / 7) (Sulfolobus tokodaii).